A 231-amino-acid polypeptide reads, in one-letter code: Phosphoheptose isomerase (231 aa).

The region spanning L35 to R190 is the SIS domain. N50–G52 serves as a coordination point for substrate. Zn(2+)-binding residues include H59 and E63. Residues E63, N92 to D93, S118 to S120, S123, and Q170 each bind substrate. Residues Q170 and H178 each coordinate Zn(2+). Low complexity-rich tracts occupy residues A197–R206 and A214–A225. Positions A197 to R231 are disordered.

It belongs to the SIS family. GmhA subfamily. Zn(2+) serves as cofactor.

It is found in the cytoplasm. It catalyses the reaction 2 D-sedoheptulose 7-phosphate = D-glycero-alpha-D-manno-heptose 7-phosphate + D-glycero-beta-D-manno-heptose 7-phosphate. Its pathway is carbohydrate biosynthesis; D-glycero-D-manno-heptose 7-phosphate biosynthesis; D-glycero-alpha-D-manno-heptose 7-phosphate and D-glycero-beta-D-manno-heptose 7-phosphate from sedoheptulose 7-phosphate: step 1/1. Catalyzes the isomerization of sedoheptulose 7-phosphate in D-glycero-D-manno-heptose 7-phosphate. The polypeptide is Phosphoheptose isomerase (Streptomyces coelicolor (strain ATCC BAA-471 / A3(2) / M145)).